A 367-amino-acid chain; its full sequence is tRNA/tmRNA (uracil-C(5))-methyltransferase (367 aa).

5 residues coordinate S-adenosyl-L-methionine: glutamine 190, tyrosine 218, asparagine 223, glutamate 239, and aspartate 299. Catalysis depends on cysteine 324, which acts as the Nucleophile. Residue glutamate 358 is the Proton acceptor of the active site.

This sequence belongs to the class I-like SAM-binding methyltransferase superfamily. RNA M5U methyltransferase family. TrmA subfamily.

It catalyses the reaction uridine(54) in tRNA + S-adenosyl-L-methionine = 5-methyluridine(54) in tRNA + S-adenosyl-L-homocysteine + H(+). The enzyme catalyses uridine(341) in tmRNA + S-adenosyl-L-methionine = 5-methyluridine(341) in tmRNA + S-adenosyl-L-homocysteine + H(+). In terms of biological role, dual-specificity methyltransferase that catalyzes the formation of 5-methyluridine at position 54 (m5U54) in all tRNAs, and that of position 341 (m5U341) in tmRNA (transfer-mRNA). This chain is tRNA/tmRNA (uracil-C(5))-methyltransferase, found in Erwinia tasmaniensis (strain DSM 17950 / CFBP 7177 / CIP 109463 / NCPPB 4357 / Et1/99).